The primary structure comprises 289 residues: Diaminopimelate epimerase (289 aa).

Residues Asn13, Gln47, and Asn67 each coordinate substrate. Cys76 acts as the Proton donor in catalysis. Residues 77–78 (GN), Asn167, Asn200, and 218–219 (ER) contribute to the substrate site. Cys227 (proton acceptor) is an active-site residue. A substrate-binding site is contributed by 228–229 (GT).

This sequence belongs to the diaminopimelate epimerase family. As to quaternary structure, homodimer.

Its subcellular location is the cytoplasm. The enzyme catalyses (2S,6S)-2,6-diaminopimelate = meso-2,6-diaminopimelate. It functions in the pathway amino-acid biosynthesis; L-lysine biosynthesis via DAP pathway; DL-2,6-diaminopimelate from LL-2,6-diaminopimelate: step 1/1. In terms of biological role, catalyzes the stereoinversion of LL-2,6-diaminopimelate (L,L-DAP) to meso-diaminopimelate (meso-DAP), a precursor of L-lysine and an essential component of the bacterial peptidoglycan. This is Diaminopimelate epimerase from Burkholderia pseudomallei (strain K96243).